Here is a 418-residue protein sequence, read N- to C-terminus: Tyrosine--tRNA ligase 1 (418 aa).

Residue Tyr-34 participates in L-tyrosine binding. The 'HIGH' region motif lies at 39 to 48 (PTADSLHIGH). The L-tyrosine site is built by Tyr-169 and Gln-173. The 'KMSKS' region signature appears at 230-234 (KFGKT). Lys-233 lines the ATP pocket. In terms of domain architecture, S4 RNA-binding spans 352 to 418 (TVLIDLLVES…GKKKYFLIRY (67 aa)).

It belongs to the class-I aminoacyl-tRNA synthetase family. TyrS type 1 subfamily. Homodimer.

The protein localises to the cytoplasm. The catalysed reaction is tRNA(Tyr) + L-tyrosine + ATP = L-tyrosyl-tRNA(Tyr) + AMP + diphosphate + H(+). Its function is as follows. Catalyzes the attachment of tyrosine to tRNA(Tyr) in a two-step reaction: tyrosine is first activated by ATP to form Tyr-AMP and then transferred to the acceptor end of tRNA(Tyr). The protein is Tyrosine--tRNA ligase 1 of Bacillus cereus (strain ATCC 10987 / NRS 248).